The primary structure comprises 224 residues: MQILLVEDDNTLFQELKKELEQWDFNVAGIEDFGKVMDTFESFNPEIVILDVQLPKYDGFYWCRKMREVSNVPILFLSSRDNPMDQVMSMELGADDYMQKPFYTNVLIAKLQAIYRRVYEFTAEEKRTLTWQDAVIDLSKDSIQKGDQTIFLSKTEMIILEILITKKNQIVSRDTIITALWDDEAFVSDNTLTVNVNRLRKKLSEIGMDSAIETKVGKGYMAHE.

Positions 2-115 (QILLVEDDNT…VLIAKLQAIY (114 aa)) constitute a Response regulatory domain. At Asp-51 the chain carries 4-aspartylphosphate. The segment at residues 126–224 (KRTLTWQDAV…KVGKGYMAHE (99 aa)) is a DNA-binding region (ompR/PhoB-type). Thr-128, Thr-130, and Thr-149 each carry phosphothreonine.

Interacts with GraX. Phosphorylated by GraS. Phosphorylated by Stk1; phosphorylation increases the DNA-binding activity of GraR.

The protein localises to the cytoplasm. In terms of biological role, member of the two-component regulatory system GraR/GraS involved in resistance against cationic antimicrobial peptides (CAMPs). Upon phosphorylation by GraS, functions as a transcription regulator by direct binding to promoter regions of target genes such as adhesins, exoproteins, transporters, toxins, and proteins involved in cell wall synthesis. Down-regulates the expression of many genes involved in RNA and amino acid synthesis or glycolysis. The sequence is that of Response regulator protein GraR (graR) from Staphylococcus aureus (strain MRSA252).